The chain runs to 420 residues: Glyceraldehyde-3-phosphate dehydrogenase GAPCP2, chloroplastic (420 aa).

Residues 1–66 (MALSSLLRSA…YNAKRVQPIK (66 aa)) constitute a chloroplast transit peptide. NAD(+)-binding positions include 94–95 (RI), D116, and R162. D-glyceraldehyde 3-phosphate is bound by residues 233–235 (SCT), T264, 293–294 (TG), and R316. The Nucleophile role is filled by C234. N398 serves as a coordination point for NAD(+).

Belongs to the glyceraldehyde-3-phosphate dehydrogenase family. In terms of assembly, homotetramer. Expressed in shoot and root vasculature, leaf veins and vascular tissue of flowers and siliques.

It localises to the plastid. Its subcellular location is the chloroplast stroma. The enzyme catalyses D-glyceraldehyde 3-phosphate + phosphate + NAD(+) = (2R)-3-phospho-glyceroyl phosphate + NADH + H(+). Functionally, involved in plastidial glycolytic pathway and plays a specific role in glycolytic energy production in non-green plastids and chloroplasts. Essential for breakdown of starch to form sucrose for export to non-photosynthetic tissues, and to generate primary metabolites for anabolic pathways such as fatty acid and amino acid synthesis. Plays an important role in plant development by providing substrates for the phosphorylated pathway of serine biosynthesis in roots. Plays a crucial role in pollen development. Functionally redundant with GAPCP1. This is Glyceraldehyde-3-phosphate dehydrogenase GAPCP2, chloroplastic (GAPCP2) from Arabidopsis thaliana (Mouse-ear cress).